The following is a 374-amino-acid chain: UDP-N-acetylglucosamine--N-acetylmuramyl-(pentapeptide) pyrophosphoryl-undecaprenol N-acetylglucosamine transferase (374 aa).

Residues 13 to 15 (TGG), Asn124, Arg165, Ser193, and Gln294 contribute to the UDP-N-acetyl-alpha-D-glucosamine site.

It belongs to the glycosyltransferase 28 family. MurG subfamily.

The protein resides in the cell inner membrane. It catalyses the reaction di-trans,octa-cis-undecaprenyl diphospho-N-acetyl-alpha-D-muramoyl-L-alanyl-D-glutamyl-meso-2,6-diaminopimeloyl-D-alanyl-D-alanine + UDP-N-acetyl-alpha-D-glucosamine = di-trans,octa-cis-undecaprenyl diphospho-[N-acetyl-alpha-D-glucosaminyl-(1-&gt;4)]-N-acetyl-alpha-D-muramoyl-L-alanyl-D-glutamyl-meso-2,6-diaminopimeloyl-D-alanyl-D-alanine + UDP + H(+). It functions in the pathway cell wall biogenesis; peptidoglycan biosynthesis. Its function is as follows. Cell wall formation. Catalyzes the transfer of a GlcNAc subunit on undecaprenyl-pyrophosphoryl-MurNAc-pentapeptide (lipid intermediate I) to form undecaprenyl-pyrophosphoryl-MurNAc-(pentapeptide)GlcNAc (lipid intermediate II). This chain is UDP-N-acetylglucosamine--N-acetylmuramyl-(pentapeptide) pyrophosphoryl-undecaprenol N-acetylglucosamine transferase, found in Rhizobium johnstonii (strain DSM 114642 / LMG 32736 / 3841) (Rhizobium leguminosarum bv. viciae).